A 249-amino-acid polypeptide reads, in one-letter code: Ditrans,polycis-undecaprenyl-diphosphate synthase ((2E,6E)-farnesyl-diphosphate specific) (249 aa).

Residue D29 is part of the active site. D29 contacts Mg(2+). Substrate contacts are provided by residues 30-33, W34, R42, H46, and 74-76; these read GNGR and STE. The active-site Proton acceptor is N77. Residues W78, R80, R197, and 203 to 205 each bind substrate; that span reads RLS. E216 is a Mg(2+) binding site.

Belongs to the UPP synthase family. In terms of assembly, homodimer. The cofactor is Mg(2+).

The catalysed reaction is 8 isopentenyl diphosphate + (2E,6E)-farnesyl diphosphate = di-trans,octa-cis-undecaprenyl diphosphate + 8 diphosphate. Functionally, generates ditrans,octacis-undecaprenyl pyrophosphate (UPP) from isopentenyl pyrophosphate (IPP) and farnesyl diphosphate. UPP is the precursor of glycosyl carrier lipid in the biosynthesis of bacterial cell wall polysaccharide components such as peptidoglycan and lipopolysaccharide. The polypeptide is Ditrans,polycis-undecaprenyl-diphosphate synthase ((2E,6E)-farnesyl-diphosphate specific) (uppS) (Micrococcus luteus (Micrococcus lysodeikticus)).